A 714-amino-acid chain; its full sequence is Fatty acid oxidation complex subunit alpha (714 aa).

The interval 1-190 (MEMASAFTLN…KLGLVDDVVP (190 aa)) is enoyl-CoA hydratase. The 3-hydroxyacyl-CoA dehydrogenase stretch occupies residues 306–714 (APLNSVGILG…FWKTTATDLQ (409 aa)).

This sequence in the N-terminal section; belongs to the enoyl-CoA hydratase/isomerase family. In the central section; belongs to the 3-hydroxyacyl-CoA dehydrogenase family. As to quaternary structure, heterotetramer of two alpha chains (FadJ) and two beta chains (FadI).

The protein resides in the cytoplasm. The catalysed reaction is a (3S)-3-hydroxyacyl-CoA = a (2E)-enoyl-CoA + H2O. It carries out the reaction a 4-saturated-(3S)-3-hydroxyacyl-CoA = a (3E)-enoyl-CoA + H2O. The enzyme catalyses a (3S)-3-hydroxyacyl-CoA + NAD(+) = a 3-oxoacyl-CoA + NADH + H(+). It catalyses the reaction (3S)-3-hydroxybutanoyl-CoA = (3R)-3-hydroxybutanoyl-CoA. The protein operates within lipid metabolism; fatty acid beta-oxidation. Functionally, catalyzes the formation of a hydroxyacyl-CoA by addition of water on enoyl-CoA. Also exhibits 3-hydroxyacyl-CoA epimerase and 3-hydroxyacyl-CoA dehydrogenase activities. This Escherichia coli O127:H6 (strain E2348/69 / EPEC) protein is Fatty acid oxidation complex subunit alpha.